Consider the following 663-residue polypeptide: Zinc finger protein 44 (663 aa).

One can recognise a KRAB domain in the interval 52 to 138; it reads VAFEDVAVNF…GETLSQIRNS (87 aa). The C2H2-type 1; atypical zinc-finger motif lies at 189-211; that stretch reads YTHKQCGKGLSYRHSFQTCERPH. The segment at 217–239 adopts a C2H2-type 2; degenerate zinc-finger fold; that stretch reads YDCKECGKTFSSPGNLRRHMVVK. 15 C2H2-type zinc fingers span residues 245–267, 273–295, 301–323, 329–351, 357–379, 385–407, 413–435, 441–463, 469–491, 497–518, 524–546, 552–574, 580–602, 608–630, and 636–658; these read YKCELCGKAFFWPSLLRMHERTH, YECKQCSKAFPVYSSYLRHEKIH, YECKQCSKAFPDYSSYLRHERTH, YKCKQCGKAFSVSGSLRVHERIH, YTCKQCGKAFCHLGSFQRHMIMH, HKCKICGKGFDFPGSARIHEGTH, YECKQCGKLLSHRSSFRRHMMAH, HKCTVCGKAFDSPSVFQRHERTH, YECKQCGKAFRTSSSLRKHETTH, YKCKCGKAFSDLFSFQSHETTH, YECKECGKAFSSFKYFCRHERTH, YECQICGKAFSRFSYLKTHERTH, YECKQCRKAFFWPSFLLRHERTH, YECKHCGKAFSRSSFCREHERTH, and YECKECGKAFSSLSSFNRHKRTH.

This sequence belongs to the krueppel C2H2-type zinc-finger protein family.

It is found in the nucleus. Functionally, may be involved in transcriptional regulation. The protein is Zinc finger protein 44 (ZNF44) of Homo sapiens (Human).